The chain runs to 575 residues: CCR4-NOT transcription complex subunit 4 (575 aa).

The segment at 14 to 57 adopts an RING-type; degenerate zinc-finger fold; the sequence is CPLCMEPLEIDDINFFPCTCGYQICRFCWHRIRTDENGLCPACR. Residues 68 to 104 adopt a coiled-coil conformation; that stretch reads KPLSQEELQRIKNEKKQKQNERKQKISENRKHLASVR. Phosphoserine is present on serine 71. The 81-residue stretch at 109 to 189 folds into the RRM domain; sequence NLVFVVGLSQ…VVDGRTLKAS (81 aa). The C3H1-type zinc finger occupies 190-217; that stretch reads LGTTKYCSYFLKNMQCPKPDCMYLHELG. Disordered regions lie at residues 256–372 and 424–458; these read TGSV…EPQS and SVQD…HPAA. Positions 281 to 299 are enriched in polar residues; that stretch reads DSLSIGNGDNSQQISNSDT. Position 301 is a phosphoserine (serine 301). Over residues 307–322 the composition is skewed to polar residues; the sequence is SKSNPVIPISSSNHSA. Serine 324 carries the phosphoserine modification. The span at 345–356 shows a compositional bias: pro residues; that stretch reads NPIPSGLPPFPS. Low complexity predominate over residues 428-441; the sequence is QPSLSPTSLQNSSS. The residue at position 432 (serine 432) is a Phosphoserine. An asymmetric dimethylarginine mark is found at arginine 475 and arginine 483. Serine 490 carries the phosphoserine modification. Position 497 is an asymmetric dimethylarginine (arginine 497). Residues 553–575 form a disordered region; the sequence is PLSTSSHSLQQGQQPTSLHTTVA.

Interacts with CNOT1 via its C-terminus but does not stably associate with the CCR4-NOT complex. Interacts (via RING domain) with UBE2D2. Interacts with ABCE1, PINK1 and PELO. In terms of processing, autoubiquitinated.

The protein localises to the cytoplasm. Its subcellular location is the nucleus. The enzyme catalyses S-ubiquitinyl-[E2 ubiquitin-conjugating enzyme]-L-cysteine + [acceptor protein]-L-lysine = [E2 ubiquitin-conjugating enzyme]-L-cysteine + N(6)-ubiquitinyl-[acceptor protein]-L-lysine.. Its pathway is protein modification; protein ubiquitination. Its function is as follows. Has E3 ubiquitin ligase activity, promoting ubiquitination and degradation of target proteins. Involved in activation of the JAK/STAT pathway. Catalyzes ubiquitination of methylated RBM15. Plays a role in quality control of translation of mitochondrial outer membrane-localized mRNA. As part of the PINK1-regulated signaling, upon mitochondria damage, ubiquitinates ABCE1 and thereby recruits autophagy receptors to the mitochondrial outer membrane to initiate mitophagy. This is CCR4-NOT transcription complex subunit 4 (CNOT4) from Homo sapiens (Human).